A 90-amino-acid polypeptide reads, in one-letter code: Small ribosomal subunit protein uS15c (90 aa).

This sequence belongs to the universal ribosomal protein uS15 family. As to quaternary structure, part of the 30S ribosomal subunit.

The protein localises to the plastid. It is found in the chloroplast. The sequence is that of Small ribosomal subunit protein uS15c (rps15-A) from Brachypodium distachyon (Purple false brome).